A 637-amino-acid polypeptide reads, in one-letter code: Glutamate--cysteine ligase catalytic subunit (637 aa).

At methionine 1 the chain carries N-acetylmethionine. Phosphoserine is present on residues serine 5 and serine 8.

It belongs to the glutamate--cysteine ligase type 3 family. In terms of assembly, heterodimer of a catalytic heavy chain and a regulatory light chain. In terms of tissue distribution, most abundant in kidney. Also found in liver and testis.

The enzyme catalyses L-cysteine + L-glutamate + ATP = gamma-L-glutamyl-L-cysteine + ADP + phosphate + H(+). It carries out the reaction (2S)-2-aminobutanoate + L-glutamate + ATP = gamma-L-glutamyl-(2S)-2-aminobutanoate + ADP + phosphate + H(+). It participates in sulfur metabolism; glutathione biosynthesis; glutathione from L-cysteine and L-glutamate: step 1/2. With respect to regulation, feedback inhibition by glutathione. Functionally, catalyzes the ATP-dependent ligation of L-glutamate and L-cysteine and participates in the first and rate-limiting step in glutathione biosynthesis. This Rattus norvegicus (Rat) protein is Glutamate--cysteine ligase catalytic subunit.